A 471-amino-acid polypeptide reads, in one-letter code: Ribulose bisphosphate carboxylase large chain (471 aa).

N6,N6,N6-trimethyllysine is present on lysine 5. Asparagine 114 and threonine 164 together coordinate substrate. Lysine 166 (proton acceptor) is an active-site residue. Lysine 168 serves as a coordination point for substrate. 3 residues coordinate Mg(2+): lysine 192, aspartate 194, and glutamate 195. The residue at position 192 (lysine 192) is an N6-carboxylysine. Catalysis depends on histidine 285, which acts as the Proton acceptor. The substrate site is built by arginine 286, histidine 318, and serine 370.

It belongs to the RuBisCO large chain family. Type I subfamily. In terms of assembly, heterohexadecamer of 8 large chains and 8 small chains; disulfide-linked. The disulfide link is formed within the large subunit homodimers. Mg(2+) is required as a cofactor. The disulfide bond which can form in the large chain dimeric partners within the hexadecamer appears to be associated with oxidative stress and protein turnover.

The protein resides in the plastid. It is found in the chloroplast. The enzyme catalyses 2 (2R)-3-phosphoglycerate + 2 H(+) = D-ribulose 1,5-bisphosphate + CO2 + H2O. The catalysed reaction is D-ribulose 1,5-bisphosphate + O2 = 2-phosphoglycolate + (2R)-3-phosphoglycerate + 2 H(+). RuBisCO catalyzes two reactions: the carboxylation of D-ribulose 1,5-bisphosphate, the primary event in carbon dioxide fixation, as well as the oxidative fragmentation of the pentose substrate in the photorespiration process. Both reactions occur simultaneously and in competition at the same active site. This Deppea grandiflora protein is Ribulose bisphosphate carboxylase large chain.